The sequence spans 219 residues: Phosphatidylserine decarboxylase proenzyme (219 aa).

Serine 188 (schiff-base intermediate with substrate; via pyruvic acid) is an active-site residue. Serine 188 bears the Pyruvic acid (Ser); by autocatalysis mark.

The protein belongs to the phosphatidylserine decarboxylase family. PSD-A subfamily. In terms of assembly, heterodimer of a large membrane-associated beta subunit and a small pyruvoyl-containing alpha subunit. It depends on pyruvate as a cofactor. Is synthesized initially as an inactive proenzyme. Formation of the active enzyme involves a self-maturation process in which the active site pyruvoyl group is generated from an internal serine residue via an autocatalytic post-translational modification. Two non-identical subunits are generated from the proenzyme in this reaction, and the pyruvate is formed at the N-terminus of the alpha chain, which is derived from the carboxyl end of the proenzyme. The post-translation cleavage follows an unusual pathway, termed non-hydrolytic serinolysis, in which the side chain hydroxyl group of the serine supplies its oxygen atom to form the C-terminus of the beta chain, while the remainder of the serine residue undergoes an oxidative deamination to produce ammonia and the pyruvoyl prosthetic group on the alpha chain.

It localises to the cell membrane. It carries out the reaction a 1,2-diacyl-sn-glycero-3-phospho-L-serine + H(+) = a 1,2-diacyl-sn-glycero-3-phosphoethanolamine + CO2. The protein operates within phospholipid metabolism; phosphatidylethanolamine biosynthesis; phosphatidylethanolamine from CDP-diacylglycerol: step 2/2. Catalyzes the formation of phosphatidylethanolamine (PtdEtn) from phosphatidylserine (PtdSer). This is Phosphatidylserine decarboxylase proenzyme from Geobacter sp. (strain M21).